A 309-amino-acid polypeptide reads, in one-letter code: Probable lipid kinase YegS-like (309 aa).

A DAGKc domain is found at 1 to 134; it reads MTTPRWRLIL…IDLLRVDADG (134 aa). ATP-binding positions include T39, 65–71, and T96; that span reads GDGTLSA. Mg(2+) is bound by residues L219, D222, and L224. The Proton acceptor role is filled by E280.

It belongs to the diacylglycerol/lipid kinase family. YegS lipid kinase subfamily. The cofactor is Mg(2+). Requires Ca(2+) as cofactor.

It localises to the cytoplasm. In terms of biological role, probably phosphorylates lipids; the in vivo substrate is unknown. The polypeptide is Probable lipid kinase YegS-like (Stenotrophomonas maltophilia (strain K279a)).